The chain runs to 205 residues: uncharacterized protein (205 aa).

The disordered stretch occupies residues methionine 1–lysine 42. Residues threonine 14–proline 24 are compositionally biased toward basic residues. Over residues serine 30–isoleucine 40 the composition is skewed to basic and acidic residues. In terms of domain architecture, RRM spans proline 47–aspartate 122. A disordered region spans residues proline 170–serine 191.

This is an uncharacterized protein from Arabidopsis thaliana (Mouse-ear cress).